Reading from the N-terminus, the 892-residue chain is Putative GTP diphosphokinase RSH1, chloroplastic (892 aa).

The transit peptide at 1-52 (MQPPTGAVSGSSSSSLECVSSCRTSWRGGGRPYECSVLSCAWNAPRALTGAL) directs the protein to the chloroplast. Positions 184–291 (FIIHPVEVAR…VKLADRLHNM (108 aa)) constitute an HD domain. The region spanning 574–637 (LGSRVFVFTP…ANAEVVEIII (64 aa)) is the TGS domain. The ACT domain occupies 809–880 (WLCIVCVDRK…MILGVLGWSV (72 aa)).

This sequence belongs to the RelA/SpoT family.

It is found in the plastid. It localises to the chloroplast. It catalyses the reaction GTP + ATP = guanosine 3'-diphosphate 5'-triphosphate + AMP. Its function is as follows. May be involved in a rapid plant ppGpp (guanosine 3'-diphosphate 5'-diphosphate)-mediated response to pathogens and other stresses. The sequence is that of Putative GTP diphosphokinase RSH1, chloroplastic (RSH1) from Oryza sativa subsp. japonica (Rice).